Consider the following 99-residue polypeptide: Aspartyl/glutamyl-tRNA(Asn/Gln) amidotransferase subunit C (99 aa).

Belongs to the GatC family. In terms of assembly, heterotrimer of A, B and C subunits.

It catalyses the reaction L-glutamyl-tRNA(Gln) + L-glutamine + ATP + H2O = L-glutaminyl-tRNA(Gln) + L-glutamate + ADP + phosphate + H(+). It carries out the reaction L-aspartyl-tRNA(Asn) + L-glutamine + ATP + H2O = L-asparaginyl-tRNA(Asn) + L-glutamate + ADP + phosphate + 2 H(+). Its function is as follows. Allows the formation of correctly charged Asn-tRNA(Asn) or Gln-tRNA(Gln) through the transamidation of misacylated Asp-tRNA(Asn) or Glu-tRNA(Gln) in organisms which lack either or both of asparaginyl-tRNA or glutaminyl-tRNA synthetases. The reaction takes place in the presence of glutamine and ATP through an activated phospho-Asp-tRNA(Asn) or phospho-Glu-tRNA(Gln). The polypeptide is Aspartyl/glutamyl-tRNA(Asn/Gln) amidotransferase subunit C (Burkholderia cenocepacia (strain ATCC BAA-245 / DSM 16553 / LMG 16656 / NCTC 13227 / J2315 / CF5610) (Burkholderia cepacia (strain J2315))).